We begin with the raw amino-acid sequence, 267 residues long: Glucosamine-6-phosphate deaminase (267 aa).

Catalysis depends on D76, which acts as the Proton acceptor; for enolization step. The active-site For ring-opening step is D145. The active-site Proton acceptor; for ring-opening step is H147. Residue E152 is the For ring-opening step of the active site.

The protein belongs to the glucosamine/galactosamine-6-phosphate isomerase family. In terms of assembly, homohexamer.

Its subcellular location is the cytoplasm. The catalysed reaction is alpha-D-glucosamine 6-phosphate + H2O = beta-D-fructose 6-phosphate + NH4(+). Its pathway is nucleotide-sugar biosynthesis; UDP-N-acetyl-alpha-D-glucosamine biosynthesis; alpha-D-glucosamine 6-phosphate from D-fructose 6-phosphate: step 1/1. Functionally, catalyzes the reversible conversion of alpha-D-glucosamine 6-phosphate (GlcN-6P) into beta-D-fructose 6-phosphate (Fru-6P) and ammonium ion, a regulatory reaction step in de novo uridine diphosphate-N-acetyl-alpha-D-glucosamine (UDP-GlcNAc) biosynthesis via hexosamine pathway. The protein is Glucosamine-6-phosphate deaminase of Dictyostelium discoideum (Social amoeba).